We begin with the raw amino-acid sequence, 155 residues long: Endoribonuclease YbeY (155 aa).

Zn(2+) contacts are provided by His-113, His-117, and His-123.

This sequence belongs to the endoribonuclease YbeY family. Zn(2+) is required as a cofactor.

It is found in the cytoplasm. Functionally, single strand-specific metallo-endoribonuclease involved in late-stage 70S ribosome quality control and in maturation of the 3' terminus of the 16S rRNA. The chain is Endoribonuclease YbeY from Ureaplasma urealyticum serovar 10 (strain ATCC 33699 / Western).